Here is a 247-residue protein sequence, read N- to C-terminus: Segregation and condensation protein A (247 aa).

The protein belongs to the ScpA family. Component of a cohesin-like complex composed of ScpA, ScpB and the Smc homodimer, in which ScpA and ScpB bind to the head domain of Smc. The presence of the three proteins is required for the association of the complex with DNA.

Its subcellular location is the cytoplasm. In terms of biological role, participates in chromosomal partition during cell division. May act via the formation of a condensin-like complex containing Smc and ScpB that pull DNA away from mid-cell into both cell halves. This Bacillus cereus (strain 03BB102) protein is Segregation and condensation protein A.